Consider the following 228-residue polypeptide: MAAPQDVHVRICNQEIVKFDLEVKALIQDIRDCSGPLSELTELNTKVKEKFQQLKQRIQELEQSAREQDKESEKQLLLQEVENHKKQMLSNQTSWRKANLTCKLAIDNLEKAELLQGGDSLRQRKTTKESLAQTSSSITESLMGISRMMSQQVQQSEEAMQTLVSSSRTLLDANEEFKSMSGTIQLGRKLITKYNRRELTDKLLIFLALALFLATVLYIVKKRLFPFL.

The Cytoplasmic segment spans residues 1–199; it reads MAAPQDVHVR…LITKYNRREL (199 aa). Positions 37-90 form a coiled coil; it reads LSELTELNTKVKEKFQQLKQRIQELEQSAREQDKESEKQLLLQEVENHKKQMLS. Residues 200-220 traverse the membrane as a helical; Anchor for type IV membrane protein segment; that stretch reads TDKLLIFLALALFLATVLYIV. Over 221–228 the chain is Lumenal; sequence KKRLFPFL.

This sequence belongs to the SEC20 family. Component of a SNARE complex consisting of STX18, USE1L, BNIP1/SEC20L and SEC22B. Interacts directly with STX18, RINT1/TIP20L and NAPA. Interacts with ZW10 through RINT1. Interacts with BCL2. Interacts with RNF186. Interacts with RNF185. Interacts with SQSTM1; increased by 'Lys-63'-linked polyubiquitination of BNIP1. Polyubiquitinated. 'Lys-63'-linked polyubiquitination by RNF185 increases the interaction with the autophagy receptor SQSTM1. Undergoes 'Lys-29'- and 'Lys-63'-linked polyubiquitination by RNF186 that may regulate BNIP1 localization to the mitochondrion.

It is found in the endoplasmic reticulum membrane. The protein localises to the mitochondrion membrane. In terms of biological role, as part of a SNARE complex may be involved in endoplasmic reticulum membranes fusion and be required for the maintenance of endoplasmic reticulum organization. Also plays a role in apoptosis. It is for instance required for endoplasmic reticulum stress-induced apoptosis. As a substrate of RNF185 interacting with SQSTM1, might also be involved in mitochondrial autophagy. The protein is Vesicle transport protein SEC20 of Mus musculus (Mouse).